The primary structure comprises 131 residues: Global transcriptional regulator Spx (131 aa).

A disulfide bridge links C10 with C13.

Belongs to the ArsC family. Spx subfamily. Interacts with the C-terminal domain of the alpha subunit of the RNAP.

The protein resides in the cytoplasm. Global transcriptional regulator that plays a key role in stress response and exerts either positive or negative regulation of genes. Acts by interacting with the C-terminal domain of the alpha subunit of the RNA polymerase (RNAP). This interaction can enhance binding of RNAP to the promoter region of target genes and stimulate their transcription, or block interaction of RNAP with activator. The protein is Global transcriptional regulator Spx of Staphylococcus haemolyticus (strain JCSC1435).